The chain runs to 210 residues: Protein DrgA (210 aa).

It belongs to the nitroreductase family. It depends on FMN as a cofactor.

Its function is as follows. Controls resistance to the herbicide Dinoseb and metronidazole. Involved in detoxification of Dinoseb via the reduction of the nitro group(s) and this process is accompanied by the formation of toxic superoxide anions. This is Protein DrgA (drgA) from Synechocystis sp. (strain ATCC 27184 / PCC 6803 / Kazusa).